Reading from the N-terminus, the 844-residue chain is Janus kinase and microtubule-interacting protein 3 (844 aa).

A coiled-coil region spans residues 8–258 (SRAKGDKAEA…QLSQVREADR (251 aa)). The disordered stretch occupies residues 250–290 (LSQVREADRHPGSPRRELPHAAGAGDASDHSGSPEQQLDEK). Positions 254 to 268 (READRHPGSPRRELP) are enriched in basic and acidic residues. The segment covering 269–282 (HAAGAGDASDHSGS) has biased composition (low complexity). Residues 289–421 (EKDARRFQLK…DELSKTLETA (133 aa)) are a coiled coil. Position 384 is a phosphoserine (Ser-384). Residues 466-483 (SDGSSVSYQTDRTDQTPC) are compositionally biased toward polar residues. Positions 466–489 (SDGSSVSYQTDRTDQTPCTPDDDL) are disordered. Coiled coils occupy residues 493-621 (MAKE…RERK) and 683-834 (VLTL…FLFL).

The protein belongs to the JAKMIP family. As to expression, specifically expressed in the CNS and endocrine tissues. Also detected in other tissues including heart, testis and prostate.

Its subcellular location is the golgi apparatus. This is Janus kinase and microtubule-interacting protein 3 (JAKMIP3) from Homo sapiens (Human).